We begin with the raw amino-acid sequence, 351 residues long: S-adenosylmethionine:tRNA ribosyltransferase-isomerase (351 aa).

Belongs to the QueA family. As to quaternary structure, monomer.

The protein resides in the cytoplasm. The enzyme catalyses 7-aminomethyl-7-carbaguanosine(34) in tRNA + S-adenosyl-L-methionine = epoxyqueuosine(34) in tRNA + adenine + L-methionine + 2 H(+). The protein operates within tRNA modification; tRNA-queuosine biosynthesis. Its function is as follows. Transfers and isomerizes the ribose moiety from AdoMet to the 7-aminomethyl group of 7-deazaguanine (preQ1-tRNA) to give epoxyqueuosine (oQ-tRNA). The chain is S-adenosylmethionine:tRNA ribosyltransferase-isomerase from Acinetobacter baumannii (strain SDF).